A 357-amino-acid chain; its full sequence is MAEITAAMVKELRESTGAGMMDCKNALSETNGDFDKAVQLLREKGLGKAAKKADRLAAEGLVSVKVSDDFTSATVSEINSETDFVAKNDQFIALTKDTTAHIQNNSLQSVEELHSSTINGVKFEEYLKSQIATIGENLVVRRFATLKAGANGVVNGYIHTNGRVGVVIAAACDSAEVASKSRDLLRQICMHIAAMRPSYLSYEDLDMTFVENEYKALVAELEKENEERRRLKDPNKPEHKIPQFASRKQLSDAILKEAEEKIKEELKTQGKPEKIWDNIIPGKMNSFIADNSQLDSKFTLMGQFYVMDDKKTVEQVIAEKEKEFGGKIKIVEFICFEVGEGLEKKTEDFAAEVAAQL.

Positions 82–85 (TDFV) are involved in Mg(2+) ion dislocation from EF-Tu.

It belongs to the EF-Ts family.

It is found in the cytoplasm. Functionally, associates with the EF-Tu.GDP complex and induces the exchange of GDP to GTP. It remains bound to the aminoacyl-tRNA.EF-Tu.GTP complex up to the GTP hydrolysis stage on the ribosome. This chain is Elongation factor Ts, found in Campylobacter jejuni subsp. doylei (strain ATCC BAA-1458 / RM4099 / 269.97).